A 37-amino-acid polypeptide reads, in one-letter code: Large ribosomal subunit protein bL36c (37 aa).

This sequence belongs to the bacterial ribosomal protein bL36 family.

It localises to the plastid. The protein resides in the chloroplast. The polypeptide is Large ribosomal subunit protein bL36c (Phaseolus angularis (Azuki bean)).